A 222-amino-acid polypeptide reads, in one-letter code: PKHD-type hydroxylase cce_3668 (222 aa).

The region spanning 78-175 is the Fe2OG dioxygenase domain; the sequence is HIHSLRFSRY…RLVVVGWVHS (98 aa). The Fe cation site is built by histidine 96, aspartate 98, and histidine 156. Arginine 166 contributes to the 2-oxoglutarate binding site.

The cofactor is Fe(2+). Requires L-ascorbate as cofactor.

This Crocosphaera subtropica (strain ATCC 51142 / BH68) (Cyanothece sp. (strain ATCC 51142)) protein is PKHD-type hydroxylase cce_3668.